Consider the following 187-residue polypeptide: MKYINVRGCNGSGKTTLLRCLARDPLCRVINVIVPDHKPIPVTYAPDGIAIIGDYTPAAAGATTAGLDRIKTQAAAKAVAELVGRDPDVKAVLFEGVVVSTIYGPWQEWSKANGGMIWAFLDTPLEVCLKRIQERNGGKPIKEDQVADKHRTIARVRDKALADGETVRDIHWETALKDIKAVIENLG.

It belongs to the thymidylate kinase family. 5-hmdU DNA kinase subfamily.

The enzyme catalyses 5-hydroxymethyl-dUMP in DNA + ATP = 5-phosphomethyl-dUMP in DNA + ADP + H(+). Phosphorylates 5-hydroxymethyluracil (5hmdU) into 5-phosphomethyl-2'-deoxyuridine (5-PmdU) on DNA as a step in the pathway leading to thymidine hypermodifications in the viral genome. The phosphate is added internally to the DNA polymer. Also transfers glutamate to 5-pyrophosphoryloxymethyldeoxyuridine (5-PPmdU) to produce 5-Nalpha-glyutamylthymidine (Nalpha-GluT). As a final result of the pathway of hypermodification, 5-aminoethyl-2'-deoxyuridine (5-NedU) substitutes for about 30% of thymidines in the viral DNA. These modifications probably prevent degradation of viral genome by the host restriction-modification antiviral defense system. The protein is 5-hmdU DNA kinase of Pseudomonas phage M6.